Reading from the N-terminus, the 409-residue chain is TNF receptor-associated factor family protein DDB_G0273435/DDB_G0273505 (409 aa).

The segment at 20 to 59 (CQLCCNLMNESVSCPNGHCLCKGCFHKQIETVKSECPICC) adopts an RING-type; degenerate zinc-finger fold. TRAF-type zinc fingers lie at residues 75–145 (KHIN…EIEN) and 145–201 (NHQD…HELS). The stretch at 221-250 (HQSLLKSTSKQLKQLRSSCEELETKLINND) forms a coiled coil. The 129-residue stretch at 252-380 (SFNGRWIIKQ…NDQLIIKFNI (129 aa)) folds into the MATH domain.

This sequence belongs to the TNF receptor-associated factor family. A subfamily.

It localises to the cytoplasm. Functionally, probable adapter protein and signal transducer that links members of the tumor necrosis factor receptor family to different signaling pathways by association with the receptor cytoplasmic domain and kinases. The polypeptide is TNF receptor-associated factor family protein DDB_G0273435/DDB_G0273505 (Dictyostelium discoideum (Social amoeba)).